The chain runs to 177 residues: Large ribosomal subunit protein uL6 (177 aa).

This sequence belongs to the universal ribosomal protein uL6 family. Part of the 50S ribosomal subunit.

Functionally, this protein binds to the 23S rRNA, and is important in its secondary structure. It is located near the subunit interface in the base of the L7/L12 stalk, and near the tRNA binding site of the peptidyltransferase center. The polypeptide is Large ribosomal subunit protein uL6 (Rubrobacter xylanophilus (strain DSM 9941 / JCM 11954 / NBRC 16129 / PRD-1)).